The following is a 357-amino-acid chain: tRNA pseudouridine synthase B (357 aa).

D42 (nucleophile) is an active-site residue.

It belongs to the pseudouridine synthase TruB family. Type 1 subfamily.

It carries out the reaction uridine(55) in tRNA = pseudouridine(55) in tRNA. In terms of biological role, responsible for synthesis of pseudouridine from uracil-55 in the psi GC loop of transfer RNAs. This chain is tRNA pseudouridine synthase B, found in Treponema denticola (strain ATCC 35405 / DSM 14222 / CIP 103919 / JCM 8153 / KCTC 15104).